The sequence spans 27 residues: Secretin (27 aa).

At L27 the chain carries Leucine amide.

It belongs to the glucagon family.

The protein resides in the secreted. In terms of biological role, hormone involved in different processes, such as regulation of the pH of the duodenal content, food intake and water homeostasis. Exerts its biological effects by binding to secretin receptor (SCTR), a G-protein coupled receptor expressed in the basolateral domain of several cells. Acts as a key gastrointestinal hormone by regulating the pH of the duodenal content. Secreted by S cells of the duodenum in the crypts of Lieberkuehn and regulates the pH of the duodenum by (1) inhibiting the secretion of gastric acid from the parietal cells of the stomach and (2) stimulating the production of bicarbonate (NaHCO(3)) from the ductal cells of the pancreas. Production of bicarbonate is essential to neutralize the pH and ensure no damage is done to the small intestine by the gastric acid. In addition to regulating the pH of the duodenal content, plays a central role in diet induced thermogenesis: acts as a non-sympathetic brown fat (BAT) activator mediating prandial thermogenesis, which consequentially induces satiation. Mechanistically, secretin released by the gut after a meal binds to secretin receptor (SCTR) in brown adipocytes, activating brown fat thermogenesis by stimulating lipolysis, which is sensed in the brain and promotes satiation. Also able to stimulate lipolysis in white adipocytes. Also plays an important role in cellular osmoregulation: released into the systemic circulation in response to hyperosmolality and acts at different levels in the hypothalamus, pituitary and kidney to regulate water homeostasis. Also plays a role in the central nervous system, possibly by acting as a neuropeptide hormone: required for hippocampal synaptic function and neural progenitor cells maintenance. This Oryctolagus cuniculus (Rabbit) protein is Secretin.